A 122-amino-acid chain; its full sequence is Large ribosomal subunit protein uL14 (122 aa).

It belongs to the universal ribosomal protein uL14 family. As to quaternary structure, part of the 50S ribosomal subunit. Forms a cluster with proteins L3 and L19. In the 70S ribosome, L14 and L19 interact and together make contacts with the 16S rRNA in bridges B5 and B8.

In terms of biological role, binds to 23S rRNA. Forms part of two intersubunit bridges in the 70S ribosome. In Bifidobacterium longum (strain DJO10A), this protein is Large ribosomal subunit protein uL14.